The sequence spans 315 residues: Kinetochore protein SPC25 homolog (315 aa).

The residue at position 1 (Met-1) is an N-acetylmethionine. Positions 57–91 (TAQSQVELMNLKADLREAEDELVKVLAVKTRKEAR) form a coiled coil. Residues 261 to 315 (APAISFSTDTNMSTPENKRSKVQVNRRQKRGSESPLLAPVSTSATRRSSRFKGKK) are disordered. Positions 266–275 (FSTDTNMSTP) are enriched in polar residues. Basic residues predominate over residues 280-289 (SKVQVNRRQK).

It belongs to the SPC25 family. Component of the NDC80 complex, which consists of NDC80, NUF2, SPC24 and SPC25.

It is found in the chromosome. It localises to the centromere. Functionally, acts as a component of the essential kinetochore-associated NDC80 complex, which is required for chromosome segregation and spindle checkpoint activity to ensure proper cell division. In Arabidopsis thaliana (Mouse-ear cress), this protein is Kinetochore protein SPC25 homolog.